The chain runs to 319 residues: Carboxylesterase NlhH (319 aa).

The Involved in the stabilization of the negatively charged intermediate by the formation of the oxyanion hole motif lies at 88-90; the sequence is HGG. Catalysis depends on residues Ser162, Asp260, and His290.

This sequence belongs to the 'GDXG' lipolytic enzyme family. In terms of assembly, monomer.

The catalysed reaction is a carboxylic ester + H2O = an alcohol + a carboxylate + H(+). In terms of biological role, hydrolyzes various short-chain esters. This is Carboxylesterase NlhH (nlhH) from Mycobacterium tuberculosis (strain CDC 1551 / Oshkosh).